Here is a 1003-residue protein sequence, read N- to C-terminus: Pumilio homolog 4 (1003 aa).

The interval 38–65 is disordered; the sequence is QHRNQQSFGRERERDIDVHRSGSAPPTV. Residues 46–57 are compositionally biased toward basic and acidic residues; the sequence is GRERERDIDVHR. Residue serine 225 is modified to Phosphoserine. Positions 285 to 300 are enriched in polar residues; it reads KNSPNTMLGSTMSSPV. Positions 285 to 328 are disordered; sequence KNSPNTMLGSTMSSPVPRNRTPDSHLVGRSTASGLPPIGTRVGP. Threonine 305 is modified (phosphothreonine). Residues 644–984 form the PUM-HD domain; the sequence is AEASLLEGFK…HIVARVEKLI (341 aa). Pumilio repeat units lie at residues 664-699, 700-735, 736-771, 772-807, 808-843, 845-880, 881-916, and 917-958; these read EIVGHVIEFSMDQYGSRFIQQKLETATDEEKNAIFP, EILPYGRTLMTDVFGNYVIQKFFEHGTTKQRKELAE, QVTGHVLALSLQMYGCRVIQKALEVVELEQQARMVK, ELDGSVMKCVHDQNGNHVIQKCIERLPQDWIQFIIS, SFYGKVLALSTHPYGCRVIQRVLEHIDDIETQRIIM, EIMDSVCTLAQDQYGNYVIQHIIQHGKPHERSEIIN, KLAGQIVKMSQQKFASNVVEKCLTFGGPEERQVLVN, and EMLG…LILS.

The protein localises to the cytoplasm. In terms of biological role, sequence-specific RNA-binding protein that regulates translation and mRNA stability by binding the 3'-UTR of target mRNAs. Binds the APUM-binding elements (APBEs) in the 3'-UTR mRNA sequence of CLV1, PNH, WUS and FAS2. In Arabidopsis thaliana (Mouse-ear cress), this protein is Pumilio homolog 4 (APUM4).